Consider the following 111-residue polypeptide: MEQRNNVFQAKYNEYKQILEELQTKIIELGHDKDEHTIVIKTLKDAEPTRKCYRMIGGALVESDVQTSLPILETKKENIEGTISKMKETLIQTAKEFEKWKKDNKIQVVKN.

Coiled-coil stretches lie at residues 1-36 (MEQR…KDEH) and 72-92 (LETK…TLIQ).

It belongs to the prefoldin subunit beta family. In terms of assembly, heterohexamer of two PFD-alpha type and four PFD-beta type subunits.

The protein localises to the cytoplasm. Functionally, binds specifically to cytosolic chaperonin (c-CPN) and transfers target proteins to it. Binds to nascent polypeptide chain and promotes folding in an environment in which there are many competing pathways for nonnative proteins. This Saccharomyces cerevisiae (strain ATCC 204508 / S288c) (Baker's yeast) protein is Prefoldin subunit 2 (GIM4).